Consider the following 295-residue polypeptide: sn-glycerol-3-phosphate transport system permease protein UgpA (295 aa).

Over 1–11 (MSSSRPVFRSR) the chain is Cytoplasmic. A helical membrane pass occupies residues 12–32 (WLPYLLVAPQLIITVIFFIWP). The Periplasmic portion of the chain corresponds to 33 to 80 (AGEALWYSLQSVDPFGFSSRFVGLDNFVALFHDSYYIDSFWTTIKFST). Positions 76–284 (IKFSTFVTVS…FLVIVLTVMQ (209 aa)) constitute an ABC transmembrane type-1 domain. A helical membrane pass occupies residues 81-101 (FVTVSGLLVSLFFAALVEYIV). At 102 to 109 (RGSRFYQT) the chain is on the cytoplasmic side. Residues 110-130 (LMLLPYAVAPAVAAVLWIFLF) form a helical membrane-spanning segment. Residues 131–156 (NPGRGLITHFLAEFGYDWNHAQNSGQ) are Periplasmic-facing. A helical transmembrane segment spans residues 157 to 177 (AMFLVVFASVWKQISYNFLFF). Residues 178 to 207 (YAALQSIPRSLIEAAAIDGAGPIRRFFKIA) are Cytoplasmic-facing. The chain crosses the membrane as a helical span at residues 208 to 228 (LPLIAPVSFFLLVVNLVYAFF). Residues 229-262 (DTFPVIDAATSGGPVQATTTLIYKIYREGFTGLD) lie on the Periplasmic side of the membrane. A helical membrane pass occupies residues 263 to 283 (LASSAAQSVVLMFLVIVLTVM). Residues 284–295 (QFRYVESKVRYQ) are Cytoplasmic-facing.

Belongs to the binding-protein-dependent transport system permease family. UgpAE subfamily. As to quaternary structure, the complex is composed of two ATP-binding proteins (UgpC), two transmembrane proteins (UgpA and UgpE) and a solute-binding protein (UgpB).

It localises to the cell inner membrane. Functionally, part of the ABC transporter complex UgpBAEC involved in sn-glycerol-3-phosphate (G3P) import. Probably responsible for the translocation of the substrate across the membrane. The chain is sn-glycerol-3-phosphate transport system permease protein UgpA (ugpA) from Escherichia coli O157:H7.